We begin with the raw amino-acid sequence, 357 residues long: Protein-L-isoaspartate O-methyltransferase domain-containing protein 1 (357 aa).

A lipid anchor (N-myristoyl glycine) is attached at glycine 2. Serine 64 is a catalytic residue. AdoMet binding motif regions lie at residues 85–94 (LNLGSGTGYL), 160–164 (YDRIY), and 181–191 (LKVGGILVMPI). The tract at residues 240–250 (VRNLQDLARIY) is BC-box. Positions 299 to 331 (PLDSEEDEKMEEDSKEEEEKEHIEAMKREEPPQ) are disordered. The segment covering 301 to 317 (DSEEDEKMEEDSKEEEE) has biased composition (acidic residues). Residues 318 to 331 (KEHIEAMKREEPPQ) are compositionally biased toward basic and acidic residues. The segment at 341–344 (LPLP) is CUL-box.

Belongs to the methyltransferase superfamily. L-isoaspartyl/D-aspartyl protein methyltransferase family. In terms of assembly, component of the probable ECS(PCMTD1) E3 ubiquitin-protein ligase complex, at least composed of CUL5, ELOB, ELOC, RBX2 and PCMTD1. Interacts (via the BC-box) with ELOB and ELOC; the interaction is direct and stabilizes PCMTD1.

It is found in the cytoplasm. The protein localises to the membrane. Functionally, substrate recognition component of an ECS (Elongin BC-CUL5-SOCS-box protein) E3 ubiquitin ligase complex which mediates the ubiquitination and subsequent proteasomal degradation of target proteins. Specifically binds to the methyltransferase cofactor S-adenosylmethionine (AdoMet) via the N-terminal AdoMet binding motif, but does not display methyltransferase activity. May provide an alternate maintenance pathway for modified proteins by acting as a damage-specific E3 ubiquitin ligase adaptor protein. This Mus musculus (Mouse) protein is Protein-L-isoaspartate O-methyltransferase domain-containing protein 1 (Pcmtd1).